Reading from the N-terminus, the 337-residue chain is Heme A synthase (337 aa).

Transmembrane regions (helical) follow at residues I6 to I26, F87 to F107, L119 to V139, L154 to K174, and L192 to V212. H256 provides a ligand contact to heme. 3 consecutive transmembrane segments (helical) span residues L258–E278, I285–L305, and V308–I328. Residue H316 participates in heme binding.

Belongs to the COX15/CtaA family. Type 2 subfamily. In terms of assembly, interacts with CtaB. Heme b serves as cofactor.

The protein localises to the cell membrane. The enzyme catalyses Fe(II)-heme o + 2 A + H2O = Fe(II)-heme a + 2 AH2. It participates in porphyrin-containing compound metabolism; heme A biosynthesis; heme A from heme O: step 1/1. Functionally, catalyzes the conversion of heme O to heme A by two successive hydroxylations of the methyl group at C8. The first hydroxylation forms heme I, the second hydroxylation results in an unstable dihydroxymethyl group, which spontaneously dehydrates, resulting in the formyl group of heme A. The sequence is that of Heme A synthase from Rickettsia massiliae (strain Mtu5).